We begin with the raw amino-acid sequence, 83 residues long: Beta-toxin Ct7 (83 aa).

The first 18 residues, 1-18 (MKVLILIIASVLLIGVEC), serve as a signal peptide directing secretion. An LCN-type CS-alpha/beta domain is found at 19–81 (KDGYPMNSEG…VWDSATNKCG (63 aa)). Cystine bridges form between cysteine 29-cysteine 80, cysteine 33-cysteine 54, cysteine 40-cysteine 61, and cysteine 44-cysteine 63. Position 81 is a glycine amide (glycine 81). Glycine 82 is a propeptide.

The protein belongs to the long (4 C-C) scorpion toxin superfamily. Sodium channel inhibitor family. Beta subfamily. In terms of tissue distribution, expressed by the venom gland.

It localises to the secreted. Beta toxins bind voltage-independently at site-4 of sodium channels (Nav) and shift the voltage of activation toward more negative potentials thereby affecting sodium channel activation and promoting spontaneous and repetitive firing. Is possibly toxic to mice, freshwater shrimp and crickets. The chain is Beta-toxin Ct7 from Centruroides tecomanus (Scorpion).